The primary structure comprises 323 residues: Quinolinate synthase (323 aa).

Residues histidine 39 and serine 56 each coordinate iminosuccinate. [4Fe-4S] cluster is bound at residue cysteine 101. Iminosuccinate is bound by residues 127 to 129 and serine 144; that span reads YIN. Residue cysteine 187 coordinates [4Fe-4S] cluster. Iminosuccinate-binding positions include 213-215 and threonine 230; that span reads HPE. Position 280 (cysteine 280) interacts with [4Fe-4S] cluster.

It belongs to the quinolinate synthase family. Type 2 subfamily. It depends on [4Fe-4S] cluster as a cofactor.

The protein localises to the cytoplasm. The enzyme catalyses iminosuccinate + dihydroxyacetone phosphate = quinolinate + phosphate + 2 H2O + H(+). The protein operates within cofactor biosynthesis; NAD(+) biosynthesis; quinolinate from iminoaspartate: step 1/1. Catalyzes the condensation of iminoaspartate with dihydroxyacetone phosphate to form quinolinate. The chain is Quinolinate synthase from Chlorobium phaeobacteroides (strain DSM 266 / SMG 266 / 2430).